The chain runs to 949 residues: Glutamate receptor ionotropic, kainate 1 (949 aa).

The signal sequence occupies residues 1 to 30 (MERSTVLIQPGLWTRDTSWTLLYFLCYILP). At 31–576 (QTSPQVLRIG…VFSFLNPLSP (546 aa)) the chain is on the extracellular side. Asn-68, Asn-74, Asn-276, Asn-379, Asn-428, Asn-439, and Asn-446 each carry an N-linked (GlcNAc...) asparagine glycan. Pro-531, Thr-533, and Arg-538 together coordinate L-glutamate. N-linked (GlcNAc...) asparagine glycosylation occurs at Asn-561. A helical transmembrane segment spans residues 577-597 (DIWMYVLLACLGVSCVLFVIA). At 598 to 653 (RFTPYEWYNPHPCNPDSDVVENNFTLLNSFWFGVGALMQQGSELMPKALSTRIVGG) the chain is on the cytoplasmic side. The chain crosses the membrane as a helical span at residues 654–674 (IWWFFTLIIISSYTANLAAFL). The Extracellular segment spans residues 675–834 (TVERMESPID…KEASALGVEN (160 aa)). 2 residues coordinate L-glutamate: Ser-704 and Thr-705. Ser-725 bears the Phosphoserine; by PKC mark. An L-glutamate-binding site is contributed by Glu-753. Thr-761 carries the post-translational modification Phosphothreonine; by PKC. Residues Cys-765 and Cys-819 are joined by a disulfide bond. An N-linked (GlcNAc...) asparagine glycan is attached at Asn-766. A helical membrane pass occupies residues 835 to 855 (IGGIFIVLAAGLVLSVFVAIG). The Cytoplasmic segment spans residues 856–949 (EFLYKSRKNN…RRTQRKETVA (94 aa)).

This sequence belongs to the glutamate-gated ion channel (TC 1.A.10.1) family. GRIK1 subfamily. In terms of assembly, homotetramer or heterotetramer of pore-forming glutamate receptor subunits. Tetramers may be formed by the dimerization of dimers. Can form functional heteromeric receptors with GRIK4 and GRIK5. Interacts with KLHL17. Expressed in the olfactory bulb (at protein level). Expressed in subsets of neurons throughout the developing and adult central and peripheral nervous systems. In the CNS principally in the medial amygdaloid nuclei, medial habenulae, pyriform and cingulate cortices, and Purkinje cell layer. Also highly expressed in embryonic and adult dorsal root ganglia. Expressed at high levels in the trigeminal ganglion neurons.

The protein localises to the cell membrane. The protein resides in the postsynaptic cell membrane. The enzyme catalyses Ca(2+)(in) = Ca(2+)(out). In terms of biological role, ionotropic glutamate receptor that functions as a cation-permeable ligand-gated ion channel, gated by L-glutamate and the glutamatergic agonist kainic acid. L-glutamate acts as an excitatory neurotransmitter at many synapses in the central nervous system. Binding of the excitatory neurotransmitter L-glutamate induces a conformation change, leading to the opening of the cation channel, and thereby converts the chemical signal to an electrical impulse. The receptor then desensitizes rapidly and enters a transient inactive state, characterized by the presence of bound agonist. This Rattus norvegicus (Rat) protein is Glutamate receptor ionotropic, kainate 1 (Grik1).